The chain runs to 199 residues: Small ribosomal subunit protein uS4 (199 aa).

The S4 RNA-binding domain occupies 94–157 (SRLDNIVYRM…QNVPTILASI (64 aa)).

Belongs to the universal ribosomal protein uS4 family. As to quaternary structure, part of the 30S ribosomal subunit. Contacts protein S5. The interaction surface between S4 and S5 is involved in control of translational fidelity.

In terms of biological role, one of the primary rRNA binding proteins, it binds directly to 16S rRNA where it nucleates assembly of the body of the 30S subunit. With S5 and S12 plays an important role in translational accuracy. In Mycoplasma mobile (strain ATCC 43663 / 163K / NCTC 11711) (Mesomycoplasma mobile), this protein is Small ribosomal subunit protein uS4.